A 383-amino-acid polypeptide reads, in one-letter code: S-adenosylmethionine synthase 1 (383 aa).

An ATP-binding site is contributed by histidine 15. Residue aspartate 17 participates in Mg(2+) binding. K(+) is bound at residue glutamate 43. Residues glutamate 56 and glutamine 99 each coordinate L-methionine. The tract at residues 99–109 (QSPDINLGVSR) is flexible loop. Residues 162–164 (DGK), 228–229 (RF), aspartate 237, 243–244 (RK), alanine 260, and lysine 264 each bind ATP. Aspartate 237 provides a ligand contact to L-methionine. Position 268 (lysine 268) interacts with L-methionine.

The protein belongs to the AdoMet synthase family. As to quaternary structure, homotetramer; dimer of dimers. Mg(2+) is required as a cofactor. Requires K(+) as cofactor.

The protein resides in the cytoplasm. It catalyses the reaction L-methionine + ATP + H2O = S-adenosyl-L-methionine + phosphate + diphosphate. It functions in the pathway amino-acid biosynthesis; S-adenosyl-L-methionine biosynthesis; S-adenosyl-L-methionine from L-methionine: step 1/1. Functionally, catalyzes the formation of S-adenosylmethionine (AdoMet) from methionine and ATP. The overall synthetic reaction is composed of two sequential steps, AdoMet formation and the subsequent tripolyphosphate hydrolysis which occurs prior to release of AdoMet from the enzyme. The sequence is that of S-adenosylmethionine synthase 1 from Rhodopseudomonas palustris (strain BisB18).